Here is a 217-residue protein sequence, read N- to C-terminus: tRNA (guanine-N(7)-)-methyltransferase (217 aa).

The S-adenosyl-L-methionine site is built by E56, E81, D108, and D130. D130 is an active-site residue. K134 and D166 together coordinate substrate.

It belongs to the class I-like SAM-binding methyltransferase superfamily. TrmB family.

The catalysed reaction is guanosine(46) in tRNA + S-adenosyl-L-methionine = N(7)-methylguanosine(46) in tRNA + S-adenosyl-L-homocysteine. The protein operates within tRNA modification; N(7)-methylguanine-tRNA biosynthesis. Functionally, catalyzes the formation of N(7)-methylguanine at position 46 (m7G46) in tRNA. The sequence is that of tRNA (guanine-N(7)-)-methyltransferase from Neorickettsia sennetsu (strain ATCC VR-367 / Miyayama) (Ehrlichia sennetsu).